The sequence spans 440 residues: Xylose isomerase (440 aa).

Residues histidine 100 and aspartate 103 contribute to the active site. 7 residues coordinate Mg(2+): glutamate 231, glutamate 267, histidine 270, aspartate 295, aspartate 306, aspartate 308, and aspartate 338.

It belongs to the xylose isomerase family. In terms of assembly, homotetramer. The cofactor is Mg(2+).

The protein resides in the cytoplasm. The enzyme catalyses alpha-D-xylose = alpha-D-xylulofuranose. In Burkholderia multivorans (strain ATCC 17616 / 249), this protein is Xylose isomerase.